The primary structure comprises 436 residues: Hydrogenobyrinate a,c-diamide synthase (436 aa).

The 192-residue stretch at 244-435 (RIAVARDDAF…MHVIDFSGEA (192 aa)) folds into the GATase cobBQ-type domain. The Nucleophile role is filled by cysteine 327.

Belongs to the CobB/CbiA family. Mg(2+) is required as a cofactor.

The enzyme catalyses hydrogenobyrinate + 2 L-glutamine + 2 ATP + 2 H2O = hydrogenobyrinate a,c-diamide + 2 L-glutamate + 2 ADP + 2 phosphate + 2 H(+). It functions in the pathway cofactor biosynthesis; adenosylcobalamin biosynthesis; cob(II)yrinate a,c-diamide from precorrin-2 (aerobic route): step 9/10. Catalyzes the ATP-dependent amidation of the two carboxylate groups at positions a and c of hydrogenobyrinate, using either L-glutamine or ammonia as the nitrogen source. The chain is Hydrogenobyrinate a,c-diamide synthase from Brucella ovis (strain ATCC 25840 / 63/290 / NCTC 10512).